A 134-amino-acid polypeptide reads, in one-letter code: MALKIRLARAGSKKRPYYHIVVADVRAPRDGRFIEQIGSWNPMLPKDSERVKLNEERIKHWLANGALPTDRVLRFLDQAGLAKRPARSNPKKAEPGKKAQERLAAARQAEEEAKAAAEAAAAAPAEAPAEEAAS.

The segment at 81–134 (LAKRPARSNPKKAEPGKKAQERLAAARQAEEEAKAAAEAAAAAPAEAPAEEAAS) is disordered. The segment covering 91 to 101 (KKAEPGKKAQE) has biased composition (basic and acidic residues). Low complexity predominate over residues 116–134 (AAEAAAAAPAEAPAEEAAS).

Belongs to the bacterial ribosomal protein bS16 family.

The protein is Small ribosomal subunit protein bS16 of Chelativorans sp. (strain BNC1).